The following is a 336-amino-acid chain: Fructose-1,6-bisphosphatase class 1 (336 aa).

Positions 91, 114, 116, and 117 each coordinate Mg(2+). Substrate-binding positions include 117–120 (DGSS), Asn210, Tyr243, and Lys273. Position 279 (Glu279) interacts with Mg(2+).

This sequence belongs to the FBPase class 1 family. Homotetramer. Requires Mg(2+) as cofactor.

It is found in the cytoplasm. It carries out the reaction beta-D-fructose 1,6-bisphosphate + H2O = beta-D-fructose 6-phosphate + phosphate. Its pathway is carbohydrate biosynthesis; gluconeogenesis. This chain is Fructose-1,6-bisphosphatase class 1, found in Dichelobacter nodosus (strain VCS1703A).